Consider the following 445-residue polypeptide: Chromosome partition protein MukF (445 aa).

The interval 213-241 (LSETSNTLKELQDTLQAAGDELQTQILDI) is leucine-zipper.

This sequence belongs to the MukF family. As to quaternary structure, interacts, and probably forms a ternary complex, with MukE and MukB via its C-terminal region. The complex formation is stimulated by calcium or magnesium. It is required for an interaction between MukE and MukB.

It localises to the cytoplasm. It is found in the nucleoid. Involved in chromosome condensation, segregation and cell cycle progression. May participate in facilitating chromosome segregation by condensation DNA from both sides of a centrally located replisome during cell division. Not required for mini-F plasmid partitioning. Probably acts via its interaction with MukB and MukE. Overexpression results in anucleate cells. It has a calcium binding activity. This Vibrio vulnificus (strain YJ016) protein is Chromosome partition protein MukF.